A 191-amino-acid polypeptide reads, in one-letter code: Elongation factor P (191 aa).

The residue at position 34 (K34) is an N6-(3,6-diaminohexanoyl)-5-hydroxylysine.

This sequence belongs to the elongation factor P family. In terms of processing, may be beta-lysylated on the epsilon-amino group of Lys-34 by the combined action of EpmA and EpmB, and then hydroxylated on the C5 position of the same residue by EpmC (if this protein is present). Lysylation is critical for the stimulatory effect of EF-P on peptide-bond formation. The lysylation moiety may extend toward the peptidyltransferase center and stabilize the terminal 3-CCA end of the tRNA. Hydroxylation of the C5 position on Lys-34 may allow additional potential stabilizing hydrogen-bond interactions with the P-tRNA.

The protein resides in the cytoplasm. It functions in the pathway protein biosynthesis; polypeptide chain elongation. Involved in peptide bond synthesis. Alleviates ribosome stalling that occurs when 3 or more consecutive Pro residues or the sequence PPG is present in a protein, possibly by augmenting the peptidyl transferase activity of the ribosome. Modification of Lys-34 is required for alleviation. This is Elongation factor P from Psychrobacter sp. (strain PRwf-1).